A 285-amino-acid polypeptide reads, in one-letter code: 4-hydroxybenzoate octaprenyltransferase (285 aa).

Helical transmembrane passes span 33 to 53, 93 to 113, 134 to 154, 166 to 186, 209 to 229, 233 to 253, and 265 to 285; these read FLAADGIPDWHVLIVFILGVV, LILFSVLVTCSFILVLTMNTL, ITYLPQFVLGLAFSWAIPMAY, WLLFVINAVWTIAYDTQYAMV, LMIGLLQLTVLTLLIALGIQL, SLYNWGVLAAAGCFVYQQWLI, and FLNNNYVGGFIFVAISASVLI.

This sequence belongs to the UbiA prenyltransferase family. Mg(2+) is required as a cofactor.

The protein localises to the cell inner membrane. It catalyses the reaction all-trans-octaprenyl diphosphate + 4-hydroxybenzoate = 4-hydroxy-3-(all-trans-octaprenyl)benzoate + diphosphate. The protein operates within cofactor biosynthesis; ubiquinone biosynthesis. In terms of biological role, catalyzes the prenylation of para-hydroxybenzoate (PHB) with an all-trans polyprenyl group. Mediates the second step in the final reaction sequence of ubiquinone-8 (UQ-8) biosynthesis, which is the condensation of the polyisoprenoid side chain with PHB, generating the first membrane-bound Q intermediate 3-octaprenyl-4-hydroxybenzoate. This is 4-hydroxybenzoate octaprenyltransferase from Aliivibrio salmonicida (strain LFI1238) (Vibrio salmonicida (strain LFI1238)).